A 291-amino-acid chain; its full sequence is uncharacterized protein (291 aa).

A run of 10 helical transmembrane segments spans residues 1–21 (MHNLIFAILCSVAVSVLLKIA), 26–46 (IIIEQAIAFNYITAITFSYFL), 67–87 (PIFLALGLLLPSVFIIMSKAV), 95–115 (SDAAQRLSLFLPILAAFLIFH), 117–137 (TLSQSKIIGVVLAFIGLFCLL), 149–169 (FKGVLGLIGVWFGYGIIDILF), 179–199 (FPATLFISFSLAACVMFIYLF), 208–228 (SSVIGGIVLGVLNFFNILFYI), 241–261 (VFAGMNIGVICLGTITGALVF), and 270–290 (WLGIIFSLSAIFCLYYLDKII). The 32-residue stretch at 107–138 (ILAAFLIFHETLSQSKIIGVVLAFIGLFCLLT) folds into the EamA domain.

It localises to the cell membrane. This is an uncharacterized protein from Haemophilus influenzae (strain ATCC 51907 / DSM 11121 / KW20 / Rd).